A 180-amino-acid chain; its full sequence is Segregation and condensation protein B (180 aa).

It belongs to the ScpB family. As to quaternary structure, homodimer. Homodimerization may be required to stabilize the binding of ScpA to the Smc head domains. Component of a cohesin-like complex composed of ScpA, ScpB and the Smc homodimer, in which ScpA and ScpB bind to the head domain of Smc. The presence of the three proteins is required for the association of the complex with DNA.

The protein resides in the cytoplasm. Participates in chromosomal partition during cell division. May act via the formation of a condensin-like complex containing Smc and ScpA that pull DNA away from mid-cell into both cell halves. The sequence is that of Segregation and condensation protein B from Staphylococcus aureus (strain USA300).